A 315-amino-acid polypeptide reads, in one-letter code: Ribose-phosphate pyrophosphokinase (315 aa).

ATP contacts are provided by residues 37-39 and 96-97; these read DGE and RQ. H131 and D170 together coordinate Mg(2+). K194 is an active-site residue. D-ribose 5-phosphate-binding positions include R196, D220, and 224-228; that span reads DTGGT.

This sequence belongs to the ribose-phosphate pyrophosphokinase family. Class I subfamily. As to quaternary structure, homohexamer. Requires Mg(2+) as cofactor.

The protein localises to the cytoplasm. It catalyses the reaction D-ribose 5-phosphate + ATP = 5-phospho-alpha-D-ribose 1-diphosphate + AMP + H(+). It functions in the pathway metabolic intermediate biosynthesis; 5-phospho-alpha-D-ribose 1-diphosphate biosynthesis; 5-phospho-alpha-D-ribose 1-diphosphate from D-ribose 5-phosphate (route I): step 1/1. Functionally, involved in the biosynthesis of the central metabolite phospho-alpha-D-ribosyl-1-pyrophosphate (PRPP) via the transfer of pyrophosphoryl group from ATP to 1-hydroxyl of ribose-5-phosphate (Rib-5-P). The protein is Ribose-phosphate pyrophosphokinase of Escherichia coli O6:H1 (strain CFT073 / ATCC 700928 / UPEC).